Here is a 248-residue protein sequence, read N- to C-terminus: MVMMRDVWVNWFEGEENGYNVCPFHEWRSEDRIEVLDQVKLLKVDEKLMDYIEDQLLDLPMELLKEVFQKSYLRKNMSRIQLDYCFIATDGKRIIAVDTMGYKTPIRKSRLTPRQEQVVFETLTEQDVPYFQLEIPLPAKDYHLLSPSPAELAGLTRKERQLKQLLLMVLDQLQTTGSDAEIKYWCTEWDPLTYKKLQQKGRTEVWEQLLNGVRAGWSQRHYKLCEAMVKGHSFFEKLWELEHPERVK.

It belongs to the UPF0736 family.

This chain is UPF0736 protein ABC2536, found in Shouchella clausii (strain KSM-K16) (Alkalihalobacillus clausii).